The chain runs to 489 residues: Glutamyl-tRNA(Gln) amidotransferase subunit A (489 aa).

Residues Lys80 and Ser160 each act as charge relay system in the active site. Ser184 (acyl-ester intermediate) is an active-site residue.

The protein belongs to the amidase family. GatA subfamily. In terms of assembly, heterotrimer of A, B and C subunits.

The enzyme catalyses L-glutamyl-tRNA(Gln) + L-glutamine + ATP + H2O = L-glutaminyl-tRNA(Gln) + L-glutamate + ADP + phosphate + H(+). In terms of biological role, allows the formation of correctly charged Gln-tRNA(Gln) through the transamidation of misacylated Glu-tRNA(Gln) in organisms which lack glutaminyl-tRNA synthetase. The reaction takes place in the presence of glutamine and ATP through an activated gamma-phospho-Glu-tRNA(Gln). This Wolbachia pipientis wMel protein is Glutamyl-tRNA(Gln) amidotransferase subunit A.